Reading from the N-terminus, the 530-residue chain is Ubiquitin carboxyl-terminal hydrolase 17-like protein 18 (530 aa).

The 296-residue stretch at 80-375 folds into the USP domain; it reads AGLQNMGNTC…QAYVLFYIQK (296 aa). Cys-89 functions as the Nucleophile in the catalytic mechanism. His-334 acts as the Proton acceptor in catalysis. Basic and acidic residues-rich tracts occupy residues 382–392 and 398–413; these read SESVSRGREPR and DTDRRAKQGELKRDHP. 2 disordered regions span residues 382 to 414 and 509 to 530; these read SESVSRGREPRALGAEDTDRRAKQGELKRDHPC and RGRARRSKGKNKHSKRALLVCQ. The segment covering 510 to 524 has biased composition (basic residues); sequence GRARRSKGKNKHSKR.

It belongs to the peptidase C19 family. USP17 subfamily.

The protein localises to the nucleus. It localises to the endoplasmic reticulum. It carries out the reaction Thiol-dependent hydrolysis of ester, thioester, amide, peptide and isopeptide bonds formed by the C-terminal Gly of ubiquitin (a 76-residue protein attached to proteins as an intracellular targeting signal).. Deubiquitinating enzyme that removes conjugated ubiquitin from specific proteins to regulate different cellular processes that may include cell proliferation, progression through the cell cycle, apoptosis, cell migration, and the cellular response to viral infection. This chain is Ubiquitin carboxyl-terminal hydrolase 17-like protein 18 (USP17L18), found in Homo sapiens (Human).